Here is a 174-residue protein sequence, read N- to C-terminus: Large ribosomal subunit protein uL10 (174 aa).

Belongs to the universal ribosomal protein uL10 family. In terms of assembly, part of the ribosomal stalk of the 50S ribosomal subunit. The N-terminus interacts with L11 and the large rRNA to form the base of the stalk. The C-terminus forms an elongated spine to which L12 dimers bind in a sequential fashion forming a multimeric L10(L12)X complex.

Forms part of the ribosomal stalk, playing a central role in the interaction of the ribosome with GTP-bound translation factors. The chain is Large ribosomal subunit protein uL10 from Acidiphilium cryptum (strain JF-5).